A 353-amino-acid chain; its full sequence is Protein Wnt-11b-1 (353 aa).

Residues 1 to 22 (MAQIHHCVTLLLILCCSGLCGA) form the signal peptide. Asn31, Asn38, and Asn88 each carry an N-linked (GlcNAc...) asparagine glycan. Intrachain disulfides connect Cys78-Cys89, Cys128-Cys136, Cys138-Cys155, Cys208-Cys222, and Cys210-Cys217. The O-palmitoleoyl serine; by PORCN moiety is linked to residue Ser214. A sulfotyrosine mark is found at Tyr274 and Tyr281. 6 cysteine pairs are disulfide-bonded: Cys282–Cys313, Cys298–Cys308, Cys312–Cys352, Cys328–Cys343, Cys330–Cys340, and Cys335–Cys336. A glycan (N-linked (GlcNAc...) asparagine) is linked at Asn299.

This sequence belongs to the Wnt family. As to quaternary structure, homodimer. Secreted homodimers form a complex with wnt5a homodimers; tyrosine sulfation of both wnt11 and wnt5a by tpst1 is required for this interaction. Interacts with the transmembrane receptor fzd7/fz7. Interacts with lrp6 and ryk. Interacts with tdgf1/frl1. Interacts weakly with frzb1 and strongly with frzb2/crescent. Interaction with frzb2/crescent antagonizes wnt11 function in the neuroectoderm, but enhances it in mesodermal tissue. Post-translationally, glycosylation is required for protein secretion. In terms of processing, palmitoleoylation is required for efficient binding to frizzled receptors. Depalmitoleoylation leads to Wnt signaling pathway inhibition.

It is found in the secreted. The protein resides in the extracellular space. The protein localises to the extracellular matrix. Its function is as follows. Ligand for the frizzled7 transmembrane receptor. Primarily acts via non-canonical Wnt pathways mediated by either Ca(2+) and PKC, or by JNK and dvl2/dsh. Depending on the cellular context, can also signal via the canonical Wnt pathway mediated by beta-catenin and dvl2/dsh. May also inhibit canonical Wnt signaling. Maternally initiates dorsal/ventral axis formation by a canonical route, which signals via lrp6. In a complex with wnt5a, activates the canonical and non-canonical processes involved in axis formation. In the non-canonical pathway, acts through fzd7/fz7 to induce phosphorylation of dvl2/dsh. Signals through a non-canonical Wnt pathway to regulate convergent extension movements during gastrulation. Interactions with the secreted Wnt antagonist sfrp5 to coordinate foregut development, acting via a non-canonical wnt pathway whereby sfrp5 restricts wnt11b activity to prevent inappropriate foregut formation. Mediates cardiogenesis via non-canonical Wnt signaling involving JNK-activation and PKC. Acts redundantly with wnt11/wnt11r during pronephros induction. The chain is Protein Wnt-11b-1 from Xenopus tropicalis (Western clawed frog).